Here is a 626-residue protein sequence, read N- to C-terminus: Extracellular metalloproteinase 1 (626 aa).

An N-terminal signal peptide occupies residues 1–17; the sequence is MLSSLLAGAGLVALAAS. Positions 18–241 are excised as a propeptide; sequence HPTSHGNALT…IHGVVDYSAD (224 aa). An N-linked (GlcNAc...) asparagine glycan is attached at Asn315. Zn(2+) is bound at residue His425. Glu426 is a catalytic residue. Residue His429 participates in Zn(2+) binding. The tract at residues 606–626 is disordered; it reads GSGARYSSTARTGSTALPSGC. A compositionally biased stretch (polar residues) spans 610 to 626; the sequence is RYSSTARTGSTALPSGC.

This sequence belongs to the peptidase M36 family. It depends on Zn(2+) as a cofactor.

It is found in the secreted. In terms of biological role, secreted metalloproteinase that allows assimilation of proteinaceous substrates. This is Extracellular metalloproteinase 1 (MEP1) from Phaeosphaeria nodorum (strain SN15 / ATCC MYA-4574 / FGSC 10173) (Glume blotch fungus).